Consider the following 86-residue polypeptide: Toxin Aam3 (86 aa).

The signal sequence occupies residues 1 to 19; that stretch reads MNYLVMISLALLFMIGVES. The LCN-type CS-alpha/beta domain maps to 21–85; sequence RDGYIAQPNN…PIKIIGQKCT (65 aa). 4 disulfide bridges follow: C31–C84, C35–C56, C42–C66, and C46–C68.

This sequence belongs to the long (4 C-C) scorpion toxin superfamily. Sodium channel inhibitor family. Alpha subfamily. Post-translationally, the C-terminal basic residue is removed by a carboxypeptidase. Expressed by the venom gland.

It is found in the secreted. Its function is as follows. Alpha toxins bind voltage-independently at site-3 of sodium channels (Nav) and inhibit the inactivation of the activated channels, thereby blocking neuronal transmission. The sequence is that of Toxin Aam3 from Androctonus amoreuxi (African fattail scorpion).